Here is a 387-residue protein sequence, read N- to C-terminus: S-adenosylmethionine synthase (387 aa).

Position 17 (His17) interacts with ATP. Asp19 provides a ligand contact to Mg(2+). Glu45 serves as a coordination point for K(+). 2 residues coordinate L-methionine: Glu58 and Gln101. A flexible loop region spans residues 101-111; the sequence is QSPDIAQGVDR. ATP is bound by residues 168–170, 234–235, Asp243, 249–250, Ala266, and Lys270; these read DAK, RF, and RK. Asp243 contributes to the L-methionine binding site. Lys274 contacts L-methionine.

The protein belongs to the AdoMet synthase family. As to quaternary structure, homotetramer; dimer of dimers. Mg(2+) serves as cofactor. Requires K(+) as cofactor.

The protein resides in the cytoplasm. The enzyme catalyses L-methionine + ATP + H2O = S-adenosyl-L-methionine + phosphate + diphosphate. Its pathway is amino-acid biosynthesis; S-adenosyl-L-methionine biosynthesis; S-adenosyl-L-methionine from L-methionine: step 1/1. Catalyzes the formation of S-adenosylmethionine (AdoMet) from methionine and ATP. The overall synthetic reaction is composed of two sequential steps, AdoMet formation and the subsequent tripolyphosphate hydrolysis which occurs prior to release of AdoMet from the enzyme. This chain is S-adenosylmethionine synthase, found in Bordetella bronchiseptica (strain ATCC BAA-588 / NCTC 13252 / RB50) (Alcaligenes bronchisepticus).